The chain runs to 959 residues: Alanine--tRNA ligase (959 aa).

Ser389 carries the post-translational modification Phosphoserine. Zn(2+) is bound by residues His606, His610, Cys725, and His729.

The protein belongs to the class-II aminoacyl-tRNA synthetase family. In terms of assembly, monomer. It depends on Zn(2+) as a cofactor.

The protein localises to the mitochondrion. It localises to the cytoplasm. The catalysed reaction is tRNA(Ala) + L-alanine + ATP = L-alanyl-tRNA(Ala) + AMP + diphosphate. Catalyzes the attachment of alanine to tRNA(Ala) in a two-step reaction: alanine is first activated by ATP to form Ala-AMP and then transferred to the acceptor end of tRNA(Ala). Also edits incorrectly charged tRNA(Ala) via its editing domain. This chain is Alanine--tRNA ligase (ala1), found in Schizosaccharomyces pombe (strain 972 / ATCC 24843) (Fission yeast).